The primary structure comprises 688 residues: Potassium-transporting ATPase ATP-binding subunit (688 aa).

4 consecutive transmembrane segments (helical) span residues 34 to 54, 62 to 82, 219 to 239, and 260 to 280; these read PVMF…LAIL, AMFT…ANMA, VALT…TATL, and VLVA…LSAI. Catalysis depends on Asp-313, which acts as the 4-aspartylphosphate intermediate. Residues Asp-350, Glu-354, 383–390, and Lys-401 each bind ATP; that span reads FSAQTRMS. 2 residues coordinate Mg(2+): Asp-524 and Asp-528. The next 3 helical transmembrane spans lie at 594 to 614, 622 to 642, and 662 to 682; these read FAII…LNIM, AILS…PLAL, and IYGL…DLLL.

This sequence belongs to the cation transport ATPase (P-type) (TC 3.A.3) family. Type IA subfamily. In terms of assembly, the system is composed of three essential subunits: KdpA, KdpB and KdpC.

It is found in the cell inner membrane. The enzyme catalyses K(+)(out) + ATP + H2O = K(+)(in) + ADP + phosphate + H(+). Its function is as follows. Part of the high-affinity ATP-driven potassium transport (or Kdp) system, which catalyzes the hydrolysis of ATP coupled with the electrogenic transport of potassium into the cytoplasm. This subunit is responsible for energy coupling to the transport system and for the release of the potassium ions to the cytoplasm. This Yersinia pseudotuberculosis serotype I (strain IP32953) protein is Potassium-transporting ATPase ATP-binding subunit.